A 465-amino-acid polypeptide reads, in one-letter code: tRNA-2-methylthio-N(6)-dimethylallyladenosine synthase (465 aa).

Positions 5–125 constitute an MTTase N-terminal domain; sequence RKLHIKSFGC…LPELLEKARR (121 aa). Residues C14, C50, C88, C166, C170, and C173 each contribute to the [4Fe-4S] cluster site. Positions 152–382 constitute a Radical SAM core domain; sequence RARGVSAFVT…QLQGLIDSQQ (231 aa). Positions 387–449 constitute a TRAM domain; sequence RASIGTTVDV…RYSLIGELVK (63 aa).

Belongs to the methylthiotransferase family. MiaB subfamily. In terms of assembly, monomer. The cofactor is [4Fe-4S] cluster.

Its subcellular location is the cytoplasm. It carries out the reaction N(6)-dimethylallyladenosine(37) in tRNA + (sulfur carrier)-SH + AH2 + 2 S-adenosyl-L-methionine = 2-methylsulfanyl-N(6)-dimethylallyladenosine(37) in tRNA + (sulfur carrier)-H + 5'-deoxyadenosine + L-methionine + A + S-adenosyl-L-homocysteine + 2 H(+). In terms of biological role, catalyzes the methylthiolation of N6-(dimethylallyl)adenosine (i(6)A), leading to the formation of 2-methylthio-N6-(dimethylallyl)adenosine (ms(2)i(6)A) at position 37 in tRNAs that read codons beginning with uridine. This is tRNA-2-methylthio-N(6)-dimethylallyladenosine synthase from Rhodopseudomonas palustris (strain BisA53).